We begin with the raw amino-acid sequence, 491 residues long: Rab5 GDP/GTP exchange factor (491 aa).

The segment at 1-74 (MSLKSERRGI…EEEAFASSQS (74 aa)) is interaction with ubiquitinated proteins. An A20-type zinc finger spans residues 13 to 47 (DQSELLCKKGCGYYGNPAWQGFCSKCWREEYHKAR). Residues Cys-19, Cys-23, Cys-35, and Cys-38 each coordinate Zn(2+). The segment at 66–85 (EEAFASSQSSQGAQSLTFSK) is disordered. Residues 69–84 (FASSQSSQGAQSLTFS) show a composition bias toward low complexity. 2 positions are modified to phosphoserine: Ser-124 and Ser-132. Residues Lys-151 and Lys-170 each carry the N6-acetyllysine modification. A VPS9 domain is found at 232–375 (EKKDLAIQKR…IEKLDAQSLN (144 aa)). Phosphoserine is present on residues Ser-373, Ser-377, and Ser-390. The stretch at 407–448 (VKQMYKNLDLLSQLNERQERIMNEAKKLEKDLIDWTDGIAKE) forms a coiled coil. The segment at 462–491 (PPNQPLAAIDSENVENDKLPPPLQPQVYAG) is disordered.

As to quaternary structure, heterodimer with RABEP1. The heterodimer binds RAB4A and RAB5A that have been activated by GTP-binding. Binds TSC2, GGA1, GGA2, GGA3, AP1G1 and AP1G2. Interacts with RAB21, and with 100-fold lower affinity also with RAB22. Interacts with ubiquitinated EGFR. Interacts with RGS14; the interaction is GTP-dependent. Monoubiquitinated. In terms of tissue distribution, expressed in the white matter tracts of the cerebellum, the fimbria hippocampi and the corpus callosum.

The protein resides in the cytoplasm. Its subcellular location is the early endosome. It localises to the recycling endosome. In terms of biological role, rab effector protein acting as linker between gamma-adaptin, RAB4A or RAB5A. Involved in endocytic membrane fusion and membrane trafficking of recycling endosomes. Stimulates nucleotide exchange on RAB5A. Can act as a ubiquitin ligase. The protein is Rab5 GDP/GTP exchange factor (Rabgef1) of Mus musculus (Mouse).